The sequence spans 181 residues: Regulator of G-protein signaling 5 (181 aa).

The 117-residue stretch at 64 to 180 (SLDKLLQNSY…VRSEFYKELI (117 aa)) folds into the RGS domain.

Expressed in heart and muscle.

The protein resides in the cytoplasm. The protein localises to the membrane. In terms of biological role, inhibits signal transduction by increasing the GTPase activity of G protein alpha subunits thereby driving them into their inactive GDP-bound form. Binds to G(i)-alpha and G(o)-alpha, but not to G(s)-alpha. The protein is Regulator of G-protein signaling 5 (Rgs5) of Mus musculus (Mouse).